Consider the following 213-residue polypeptide: Protein-L-isoaspartate O-methyltransferase (213 aa).

Residue S64 is part of the active site.

This sequence belongs to the methyltransferase superfamily. L-isoaspartyl/D-aspartyl protein methyltransferase family.

The protein resides in the cytoplasm. It catalyses the reaction [protein]-L-isoaspartate + S-adenosyl-L-methionine = [protein]-L-isoaspartate alpha-methyl ester + S-adenosyl-L-homocysteine. In terms of biological role, catalyzes the methyl esterification of L-isoaspartyl residues in peptides and proteins that result from spontaneous decomposition of normal L-aspartyl and L-asparaginyl residues. It plays a role in the repair and/or degradation of damaged proteins. This chain is Protein-L-isoaspartate O-methyltransferase, found in Flavobacterium psychrophilum (strain ATCC 49511 / DSM 21280 / CIP 103535 / JIP02/86).